Reading from the N-terminus, the 401-residue chain is 4-hydroxy-3-methylbut-2-enyl diphosphate reductase (401 aa).

Cysteine 66 is a binding site for [4Fe-4S] cluster. Histidine 96 contributes to the (2E)-4-hydroxy-3-methylbut-2-enyl diphosphate binding site. Dimethylallyl diphosphate is bound at residue histidine 96. Histidine 96 serves as a coordination point for isopentenyl diphosphate. Cysteine 157 contacts [4Fe-4S] cluster. Histidine 185 lines the (2E)-4-hydroxy-3-methylbut-2-enyl diphosphate pocket. A dimethylallyl diphosphate-binding site is contributed by histidine 185. An isopentenyl diphosphate-binding site is contributed by histidine 185. The Proton donor role is filled by glutamate 187. Threonine 250 is a binding site for (2E)-4-hydroxy-3-methylbut-2-enyl diphosphate. Cysteine 288 serves as a coordination point for [4Fe-4S] cluster. (2E)-4-hydroxy-3-methylbut-2-enyl diphosphate is bound by residues serine 317, serine 318, asparagine 319, and serine 381. Dimethylallyl diphosphate is bound by residues serine 317, serine 318, asparagine 319, and serine 381. Isopentenyl diphosphate is bound by residues serine 317, serine 318, asparagine 319, and serine 381.

Belongs to the IspH family. [4Fe-4S] cluster serves as cofactor.

The catalysed reaction is isopentenyl diphosphate + 2 oxidized [2Fe-2S]-[ferredoxin] + H2O = (2E)-4-hydroxy-3-methylbut-2-enyl diphosphate + 2 reduced [2Fe-2S]-[ferredoxin] + 2 H(+). It carries out the reaction dimethylallyl diphosphate + 2 oxidized [2Fe-2S]-[ferredoxin] + H2O = (2E)-4-hydroxy-3-methylbut-2-enyl diphosphate + 2 reduced [2Fe-2S]-[ferredoxin] + 2 H(+). It participates in isoprenoid biosynthesis; dimethylallyl diphosphate biosynthesis; dimethylallyl diphosphate from (2E)-4-hydroxy-3-methylbutenyl diphosphate: step 1/1. Its pathway is isoprenoid biosynthesis; isopentenyl diphosphate biosynthesis via DXP pathway; isopentenyl diphosphate from 1-deoxy-D-xylulose 5-phosphate: step 6/6. Its function is as follows. Catalyzes the conversion of 1-hydroxy-2-methyl-2-(E)-butenyl 4-diphosphate (HMBPP) into a mixture of isopentenyl diphosphate (IPP) and dimethylallyl diphosphate (DMAPP). Acts in the terminal step of the DOXP/MEP pathway for isoprenoid precursor biosynthesis. The sequence is that of 4-hydroxy-3-methylbut-2-enyl diphosphate reductase from Prochlorococcus marinus (strain NATL1A).